The sequence spans 223 residues: Urease accessory protein UreF (223 aa).

The protein belongs to the UreF family. UreD, UreF and UreG form a complex that acts as a GTP-hydrolysis-dependent molecular chaperone, activating the urease apoprotein by helping to assemble the nickel containing metallocenter of UreC. The UreE protein probably delivers the nickel.

The protein resides in the cytoplasm. Required for maturation of urease via the functional incorporation of the urease nickel metallocenter. The protein is Urease accessory protein UreF of Sinorhizobium medicae (strain WSM419) (Ensifer medicae).